The chain runs to 188 residues: ATP synthase subunit delta (188 aa).

Belongs to the ATPase delta chain family. F-type ATPases have 2 components, F(1) - the catalytic core - and F(0) - the membrane proton channel. F(1) has five subunits: alpha(3), beta(3), gamma(1), delta(1), epsilon(1). F(0) has three main subunits: a(1), b(2) and c(10-14). The alpha and beta chains form an alternating ring which encloses part of the gamma chain. F(1) is attached to F(0) by a central stalk formed by the gamma and epsilon chains, while a peripheral stalk is formed by the delta and b chains.

Its subcellular location is the cell inner membrane. Its function is as follows. F(1)F(0) ATP synthase produces ATP from ADP in the presence of a proton or sodium gradient. F-type ATPases consist of two structural domains, F(1) containing the extramembraneous catalytic core and F(0) containing the membrane proton channel, linked together by a central stalk and a peripheral stalk. During catalysis, ATP synthesis in the catalytic domain of F(1) is coupled via a rotary mechanism of the central stalk subunits to proton translocation. Functionally, this protein is part of the stalk that links CF(0) to CF(1). It either transmits conformational changes from CF(0) to CF(1) or is implicated in proton conduction. This Sinorhizobium fredii (strain NBRC 101917 / NGR234) protein is ATP synthase subunit delta.